A 152-amino-acid chain; its full sequence is Lipoprotein signal peptidase (152 aa).

Transmembrane regions (helical) follow at residues 55–75 (NKMW…VFYM) and 85–105 (LGIS…DRVF). Residues D111 and D129 contribute to the active site. Residues 124-144 (VFNIADSALCIGVVLIIIQTV) form a helical membrane-spanning segment.

Belongs to the peptidase A8 family.

Its subcellular location is the cell membrane. The catalysed reaction is Release of signal peptides from bacterial membrane prolipoproteins. Hydrolyzes -Xaa-Yaa-Zaa-|-(S,diacylglyceryl)Cys-, in which Xaa is hydrophobic (preferably Leu), and Yaa (Ala or Ser) and Zaa (Gly or Ala) have small, neutral side chains.. The protein operates within protein modification; lipoprotein biosynthesis (signal peptide cleavage). This protein specifically catalyzes the removal of signal peptides from prolipoproteins. The protein is Lipoprotein signal peptidase of Bacillus mycoides (strain KBAB4) (Bacillus weihenstephanensis).